Here is a 400-residue protein sequence, read N- to C-terminus: tRNA-specific 2-thiouridylase MnmA (400 aa).

ATP is bound by residues 19 to 26 (AMSGGVDS) and leucine 45. Cysteine 113 (nucleophile) is an active-site residue. Residues cysteine 113 and cysteine 210 are joined by a disulfide bond. Glycine 137 contributes to the ATP binding site. The interval 160–162 (RDQ) is interaction with tRNA. Cysteine 210 (cysteine persulfide intermediate) is an active-site residue.

Belongs to the MnmA/TRMU family.

It localises to the cytoplasm. The catalysed reaction is S-sulfanyl-L-cysteinyl-[protein] + uridine(34) in tRNA + AH2 + ATP = 2-thiouridine(34) in tRNA + L-cysteinyl-[protein] + A + AMP + diphosphate + H(+). Catalyzes the 2-thiolation of uridine at the wobble position (U34) of tRNA, leading to the formation of s(2)U34. In Rhodopseudomonas palustris (strain BisA53), this protein is tRNA-specific 2-thiouridylase MnmA.